Reading from the N-terminus, the 240-residue chain is MLVFAGLGNPGAKYADNRHNVGFMAADAIARRHSFSPWSKKFQGLIAEGTIAGEKIILIKPQTFMNLSGQSVGEALRFYKLELSALTVFYDEIDLAEGKLRIKTGGGAGGHNGIRSIDGHIGNAYRRVRIGVGHPGIKEMVQHHVLGDFAKADREWLDPLLDAIADNAAMIVKGDESGFMNKAALAVQGKAIAELEKPAQKQQPKQQSHIRQARSQQAPAKLPETGPMAAMLKKLFGNKD.

Residue Y14 participates in tRNA binding. The active-site Proton acceptor is H19. Residues F64, N66, and N112 each contribute to the tRNA site. Positions 196-227 are disordered; it reads EKPAQKQQPKQQSHIRQARSQQAPAKLPETGP. A compositionally biased stretch (polar residues) spans 209-218; sequence HIRQARSQQA.

It belongs to the PTH family. Monomer.

Its subcellular location is the cytoplasm. It catalyses the reaction an N-acyl-L-alpha-aminoacyl-tRNA + H2O = an N-acyl-L-amino acid + a tRNA + H(+). Its function is as follows. Hydrolyzes ribosome-free peptidyl-tRNAs (with 1 or more amino acids incorporated), which drop off the ribosome during protein synthesis, or as a result of ribosome stalling. Catalyzes the release of premature peptidyl moieties from peptidyl-tRNA molecules trapped in stalled 50S ribosomal subunits, and thus maintains levels of free tRNAs and 50S ribosomes. This is Peptidyl-tRNA hydrolase from Mesorhizobium japonicum (strain LMG 29417 / CECT 9101 / MAFF 303099) (Mesorhizobium loti (strain MAFF 303099)).